A 462-amino-acid chain; its full sequence is Squalene synthase ERG9 (462 aa).

Residues 406-426 (AVVLFGVVIAALVCISGLMLG) form a helical membrane-spanning segment.

Belongs to the phytoene/squalene synthase family. It depends on Mg(2+) as a cofactor.

It localises to the endoplasmic reticulum membrane. The protein localises to the microsome. It carries out the reaction 2 (2E,6E)-farnesyl diphosphate + NADPH + H(+) = squalene + 2 diphosphate + NADP(+). The catalysed reaction is 2 (2E,6E)-farnesyl diphosphate + NADH + H(+) = squalene + 2 diphosphate + NAD(+). The protein operates within terpene metabolism; lanosterol biosynthesis; lanosterol from farnesyl diphosphate: step 1/3. It functions in the pathway steroid metabolism; ergosterol biosynthesis. Squalene synthase; part of the third module of ergosterol biosynthesis pathway that includes the late steps of the pathway. ERG9 produces squalene from 2 farnesyl pyrophosphate moieties. The third module or late pathway involves the ergosterol synthesis itself through consecutive reactions that mainly occur in the endoplasmic reticulum (ER) membrane. Firstly, the squalene synthase ERG9 catalyzes the condensation of 2 farnesyl pyrophosphate moieties to form squalene, which is the precursor of all steroids. Squalene synthase is crucial for balancing the incorporation of farnesyl diphosphate (FPP) into sterol and nonsterol isoprene synthesis. Secondly, squalene is converted into lanosterol by the consecutive action of the squalene epoxidase ERG1 and the lanosterol synthase ERG7. Then, the delta(24)-sterol C-methyltransferase ERG6 methylates lanosterol at C-24 to produce eburicol. Eburicol is the substrate of the sterol 14-alpha demethylase encoded by CYP51A, CYP51B and CYP51C, to yield 4,4,24-trimethyl ergosta-8,14,24(28)-trienol. CYP51B encodes the enzyme primarily responsible for sterol 14-alpha-demethylation, and plays an essential role in ascospore formation. CYP51A encodes an additional sterol 14-alpha-demethylase, induced on ergosterol depletion and responsible for the intrinsic variation in azole sensitivity. The third CYP51 isoform, CYP51C, does not encode a sterol 14-alpha-demethylase, but is required for full virulence on host wheat ears. The C-14 reductase ERG24 then reduces the C14=C15 double bond which leads to 4,4-dimethylfecosterol. A sequence of further demethylations at C-4, involving the C-4 demethylation complex containing the C-4 methylsterol oxidases ERG25, the sterol-4-alpha-carboxylate 3-dehydrogenase ERG26 and the 3-keto-steroid reductase ERG27, leads to the production of fecosterol via 4-methylfecosterol. ERG28 has a role as a scaffold to help anchor ERG25, ERG26 and ERG27 to the endoplasmic reticulum. The C-8 sterol isomerase ERG2 then catalyzes the reaction which results in unsaturation at C-7 in the B ring of sterols and thus converts fecosterol to episterol. The sterol-C5-desaturases ERG3A and ERG3BB then catalyze the introduction of a C-5 double bond in the B ring to produce 5-dehydroepisterol. The C-22 sterol desaturases ERG5A and ERG5B further convert 5-dehydroepisterol into ergosta-5,7,22,24(28)-tetraen-3beta-ol by forming the C-22(23) double bond in the sterol side chain. Finally, ergosta-5,7,22,24(28)-tetraen-3beta-ol is substrate of the C-24(28) sterol reductase ERG4 to produce ergosterol. The sequence is that of Squalene synthase ERG9 from Gibberella zeae (strain ATCC MYA-4620 / CBS 123657 / FGSC 9075 / NRRL 31084 / PH-1) (Wheat head blight fungus).